The following is a 174-amino-acid chain: CEN-like protein 1 (174 aa).

It belongs to the phosphatidylethanolamine-binding protein family. Expressed in vegetative axillary meristems but not in the main shoot meristem.

The protein localises to the cytoplasm. In terms of biological role, may form complexes with phosphorylated ligands by interfering with kinases and their effectors. In Nicotiana tabacum (Common tobacco), this protein is CEN-like protein 1 (CET1).